The following is a 296-amino-acid chain: NAD kinase (296 aa).

The active-site Proton acceptor is the D74. Residues 74 to 75, 148 to 149, R176, D178, and 189 to 194 each bind NAD(+); these read DG, ND, and TAYALS.

Belongs to the NAD kinase family. The cofactor is a divalent metal cation.

The protein resides in the cytoplasm. It catalyses the reaction NAD(+) + ATP = ADP + NADP(+) + H(+). Its function is as follows. Involved in the regulation of the intracellular balance of NAD and NADP, and is a key enzyme in the biosynthesis of NADP. Catalyzes specifically the phosphorylation on 2'-hydroxyl of the adenosine moiety of NAD to yield NADP. This chain is NAD kinase, found in Nitrosomonas eutropha (strain DSM 101675 / C91 / Nm57).